The chain runs to 429 residues: UDP-N-acetylglucosamine 1-carboxyvinyltransferase (429 aa).

Residue 22–23 participates in phosphoenolpyruvate binding; that stretch reads KN. Arg102 contacts UDP-N-acetyl-alpha-D-glucosamine. Cys126 acts as the Proton donor in catalysis. Cys126 carries the 2-(S-cysteinyl)pyruvic acid O-phosphothioketal modification. Residues 131–135, Asp316, and Ile338 each bind UDP-N-acetyl-alpha-D-glucosamine; that span reads RPVDL.

This sequence belongs to the EPSP synthase family. MurA subfamily.

The protein resides in the cytoplasm. The enzyme catalyses phosphoenolpyruvate + UDP-N-acetyl-alpha-D-glucosamine = UDP-N-acetyl-3-O-(1-carboxyvinyl)-alpha-D-glucosamine + phosphate. It functions in the pathway cell wall biogenesis; peptidoglycan biosynthesis. Cell wall formation. Adds enolpyruvyl to UDP-N-acetylglucosamine. This is UDP-N-acetylglucosamine 1-carboxyvinyltransferase from Methylobacterium sp. (strain 4-46).